Reading from the N-terminus, the 161-residue chain is Large-conductance mechanosensitive channel (161 aa).

2 helical membrane-spanning segments follow: residues 21-41 (VGVI…DGVI) and 79-99 (GAFI…FLLV). Residues 142–154 (TAAPKAAAAPVAK) show a composition bias toward low complexity. Positions 142-161 (TAAPKAAAAPVAKPKTKPKA) are disordered.

This sequence belongs to the MscL family. In terms of assembly, homopentamer.

The protein localises to the cell inner membrane. Its function is as follows. Channel that opens in response to stretch forces in the membrane lipid bilayer. May participate in the regulation of osmotic pressure changes within the cell. The chain is Large-conductance mechanosensitive channel from Caulobacter sp. (strain K31).